We begin with the raw amino-acid sequence, 866 residues long: Retinoblastoma-related protein 2 (866 aa).

The interval 274 to 475 (TPITSAMTTA…EKGSSLYNSL (202 aa)) is domain A. Residues 274–721 (TPITSAMTTA…NEVFVPAAKP (448 aa)) form a pocket region. Residues 476 to 593 (IVARPSVASE…PVGGNEKCAD (118 aa)) are spacer. The interval 513-551 (LPATPSKKRAAGRDDNADPRSPKRPCNESRSPVVEHNLQ) is disordered. Residues 523–539 (AGRDDNADPRSPKRPCN) are compositionally biased toward basic and acidic residues. The tract at residues 594-721 (VTIQIFFSKI…NEVFVPAAKP (128 aa)) is domain B. Disordered stretches follow at residues 731–754 (TRPE…PFPN) and 839–866 (SLGQ…KPDT). The segment covering 841-850 (GQPNGGSTSL) has biased composition (polar residues).

This sequence belongs to the retinoblastoma protein (RB) family. As to expression, ubiquitous.

It localises to the nucleus. Functionally, regulator of biological processes that recruits a histone deacetylase to control gene transcription. May play a role in the entry into mitosis, negatively regulating the cell proliferation. Formation of stable complexes with geminiviridae replication-associated proteins may create a cellular environment which favors viral DNA replication. The sequence is that of Retinoblastoma-related protein 2 (RBR2) from Zea mays (Maize).